A 335-amino-acid chain; its full sequence is Anthranilate phosphoribosyltransferase (335 aa).

5-phospho-alpha-D-ribose 1-diphosphate contacts are provided by residues G79, 82-83 (GD), T87, 89-92 (NIST), 107-115 (KHGSRSVSS), and S119. Position 79 (G79) interacts with anthranilate. Position 91 (S91) interacts with Mg(2+). R165 is an anthranilate binding site. The Mg(2+) site is built by D223 and E224.

The protein belongs to the anthranilate phosphoribosyltransferase family. Homodimer. Requires Mg(2+) as cofactor.

It carries out the reaction N-(5-phospho-beta-D-ribosyl)anthranilate + diphosphate = 5-phospho-alpha-D-ribose 1-diphosphate + anthranilate. It functions in the pathway amino-acid biosynthesis; L-tryptophan biosynthesis; L-tryptophan from chorismate: step 2/5. Its function is as follows. Catalyzes the transfer of the phosphoribosyl group of 5-phosphorylribose-1-pyrophosphate (PRPP) to anthranilate to yield N-(5'-phosphoribosyl)-anthranilate (PRA). The chain is Anthranilate phosphoribosyltransferase from Helicobacter pylori (strain Shi470).